Consider the following 284-residue polypeptide: Bifunctional protein FolD 2 (284 aa).

NADP(+) is bound by residues 166–168 (GAS) and Ile232.

It belongs to the tetrahydrofolate dehydrogenase/cyclohydrolase family. In terms of assembly, homodimer.

The enzyme catalyses (6R)-5,10-methylene-5,6,7,8-tetrahydrofolate + NADP(+) = (6R)-5,10-methenyltetrahydrofolate + NADPH. It carries out the reaction (6R)-5,10-methenyltetrahydrofolate + H2O = (6R)-10-formyltetrahydrofolate + H(+). The protein operates within one-carbon metabolism; tetrahydrofolate interconversion. In terms of biological role, catalyzes the oxidation of 5,10-methylenetetrahydrofolate to 5,10-methenyltetrahydrofolate and then the hydrolysis of 5,10-methenyltetrahydrofolate to 10-formyltetrahydrofolate. This is Bifunctional protein FolD 2 from Pseudomonas putida (strain ATCC 47054 / DSM 6125 / CFBP 8728 / NCIMB 11950 / KT2440).